The primary structure comprises 281 residues: MDPPLVNDSSFSAANPSSYTLSEIWPFPVNDAVRSGLRLAVNSGRVFTRSEHSGNKDVSAAEESTVTDLTAGWGSRKTRDLNSEDDSSKMVSSSSSGNELKESGDKKRKLCGSESGNGDGSMRPEGETSSGGGGSKATEQKNKPEPPKDYIHVRARRGQATDRHSLAERARREKISEKMTALQDIIPGCNKIIGKALVLDEIINYIQSLQRQVEFLSMKLEVVNSGASTGPTIGVFPSGDLGTLPIDVHRTIYEQQEANETRVSQPEWLHMQVDGNFNRTT.

Positions 47 to 167 are disordered; the sequence is FTRSEHSGNK…GQATDRHSLA (121 aa). 2 stretches are compositionally biased toward basic and acidic residues: residues 77-88 and 138-152; these read KTRDLNSEDDSS and TEQK…DYIH. A bHLH domain is found at 159 to 209; the sequence is QATDRHSLAERARREKISEKMTALQDIIPGCNKIIGKALVLDEIINYIQSL.

Homodimer.

Its subcellular location is the nucleus. This chain is Transcription factor bHLH79 (BHLH79), found in Arabidopsis thaliana (Mouse-ear cress).